The chain runs to 1755 residues: Transposon Ty1-MR1 Gag-Pol polyprotein (1755 aa).

Composition is skewed to polar residues over residues 1–31 (MESQ…TTQD), 46–60 (VSTQ…TPLS), and 137–168 (VGTH…TNQH). Disordered regions lie at residues 1-88 (MESQ…YPQQ), 137-174 (VGTH…PPPI), and 350-420 (QQES…IRGS). Residues 299 to 401 (NNGIPINNKV…NSQSRTARAH (103 aa)) are RNA-binding. The segment covering 363–372 (SPSDEKKDSR) has biased composition (basic and acidic residues). Polar residues predominate over residues 373 to 411 (TYTNTTKPKSITRNSQKPNNSQSRTARAHNVSTFNNSPG). The active-site For protease activity; shared with dimeric partner is the aspartate 461. Residues 583–640 (NVHTSESTRKYPYPFIHRMLAHANAQTIRYSLKNNTITYFNESDVDWSSAIDYQCPDC) form an integrase-type zinc finger-like region. Residues 660–835 (NSYEPFQYLH…AGLDISTLLP (176 aa)) form the Integrase catalytic domain. The Mg(2+) site is built by aspartate 671 and aspartate 736. A disordered region spans residues 958–1172 (AVSPTDSTPP…LGGIGDSNAY (215 aa)). Residues 960–969 (SPTDSTPPST) show a composition bias toward low complexity. The segment covering 1005 to 1015 (STPQISDIEST) has biased composition (polar residues). Over residues 1038 to 1053 (ESSHASKSKDFRHSDS) the composition is skewed to basic and acidic residues. 2 stretches are compositionally biased toward polar residues: residues 1054 to 1082 (YSDN…QTSE) and 1095 to 1106 (SIDTSSSESNSL). A Bipartite nuclear localization signal motif is present at residues 1178–1212 (KKRSLEDNETEIKVSRDTWNTKNMRSLEPPRSKKR). The region spanning 1338–1476 (NNYYITQLDI…DILGLEIKYQ (139 aa)) is the Reverse transcriptase Ty1/copia-type domain. Aspartate 1346, aspartate 1427, aspartate 1428, aspartate 1610, glutamate 1652, and aspartate 1685 together coordinate Mg(2+). The RNase H Ty1/copia-type domain maps to 1610–1752 (DASYGNQPYY…IKTFKLLTNK (143 aa)).

The capsid protein forms a homotrimer, from which the VLPs are assembled. The protease is a homodimer, whose active site consists of two apposed aspartic acid residues. In terms of processing, initially, virus-like particles (VLPs) are composed of the structural unprocessed proteins Gag and Gag-Pol, and also contain the host initiator methionine tRNA (tRNA(i)-Met) which serves as a primer for minus-strand DNA synthesis, and a dimer of genomic Ty RNA. Processing of the polyproteins occurs within the particle and proceeds by an ordered pathway, called maturation. First, the protease (PR) is released by autocatalytic cleavage of the Gag-Pol polyprotein yielding capsid protein p45 and a Pol-p154 precursor protein. This cleavage is a prerequisite for subsequent processing of Pol-p154 at the remaining sites to release the mature structural and catalytic proteins. Maturation takes place prior to the RT reaction and is required to produce transposition-competent VLPs.

Its subcellular location is the cytoplasm. The protein localises to the nucleus. It carries out the reaction DNA(n) + a 2'-deoxyribonucleoside 5'-triphosphate = DNA(n+1) + diphosphate. The catalysed reaction is Endonucleolytic cleavage to 5'-phosphomonoester.. In terms of biological role, capsid protein (CA) is the structural component of the virus-like particle (VLP), forming the shell that encapsulates the retrotransposons dimeric RNA genome. The particles are assembled from trimer-clustered units and there are holes in the capsid shells that allow for the diffusion of macromolecules. CA also has nucleocapsid-like chaperone activity, promoting primer tRNA(i)-Met annealing to the multipartite primer-binding site (PBS), dimerization of Ty1 RNA and initiation of reverse transcription. Its function is as follows. The aspartyl protease (PR) mediates the proteolytic cleavages of the Gag and Gag-Pol polyproteins after assembly of the VLP. Reverse transcriptase/ribonuclease H (RT) is a multifunctional enzyme that catalyzes the conversion of the retro-elements RNA genome into dsDNA within the VLP. The enzyme displays a DNA polymerase activity that can copy either DNA or RNA templates, and a ribonuclease H (RNase H) activity that cleaves the RNA strand of RNA-DNA heteroduplexes during plus-strand synthesis and hydrolyzes RNA primers. The conversion leads to a linear dsDNA copy of the retrotransposon that includes long terminal repeats (LTRs) at both ends. Functionally, integrase (IN) targets the VLP to the nucleus, where a subparticle preintegration complex (PIC) containing at least integrase and the newly synthesized dsDNA copy of the retrotransposon must transit the nuclear membrane. Once in the nucleus, integrase performs the integration of the dsDNA into the host genome. The polypeptide is Transposon Ty1-MR1 Gag-Pol polyprotein (TY1B-MR1) (Saccharomyces cerevisiae (strain ATCC 204508 / S288c) (Baker's yeast)).